Reading from the N-terminus, the 860-residue chain is Leucine-rich repeat and death domain-containing protein 1 (860 aa).

The tract at residues 1–103 (MSEKEGMSEV…TGTSQSLSSL (103 aa)) is disordered. Residues 50 to 72 (KSSNQIYETHPRQNTLESTSSSG) show a composition bias toward polar residues. Over residues 90-103 (TSTRTGTSQSLSSL) the composition is skewed to low complexity. LRR repeat units follow at residues 139–163 (LGAD…ILKI), 164–186 (KYVK…DSGD), 187–210 (LLGL…IQLL), 211–233 (HNLR…ISQL), 235–256 (NIRQ…LECL), 257–279 (GNLE…LPSL), 281–302 (TLRV…LCFL), 303–325 (PKLI…IREL), 326–348 (KNLE…IFQL), 350–371 (KIKE…IENF), 372–394 (RELR…ISCC), 396–417 (MLEC…IHKL), 419–440 (NLRK…ISHL), 441–463 (NNIC…IKNC), 465–486 (KIIK…LCAL), 487–510 (DSLY…SFSK), 512–532 (LLHL…FCSL), 533–555 (INLK…ISNM), 557–578 (SLHV…LCTL), 579–601 (ENLQ…ICNL), 603–624 (GIQK…LCQL), 627–650 (LEQL…LSNM), 651–673 (TQLK…IGEL), 675–696 (NLVS…LLSL), 697–719 (NDLQ…IYNI), and 721–742 (SLKE…ICKG). The region spanning 764 to 852 (EKIFKIVANN…EIMDKITALN (89 aa)) is the Death domain. Residues 856 to 860 (RAIKF) form an LRR 27 repeat.

This Homo sapiens (Human) protein is Leucine-rich repeat and death domain-containing protein 1 (LRRD1).